The following is a 296-amino-acid chain: Arginase (296 aa).

4 residues coordinate Mn(2+): His98, Asp124, His126, and Asp128. The L-arginine site is built by Asn130, Ser137, and Asp178. The Mn(2+) site is built by Asp225 and Asp227. 2 residues coordinate L-arginine: Asp227 and Thr239.

It belongs to the arginase family. Monomer. Homodimer; dimerization is dispensable for catalytic activity. Mn(2+) serves as cofactor.

It carries out the reaction L-arginine + H2O = urea + L-ornithine. Its pathway is nitrogen metabolism; urea cycle; L-ornithine and urea from L-arginine: step 1/1. With respect to regulation, substitution of the loosely bound surface exposed Mn(2+) with Mg(2+), Zn(2+), Ni(2+) or Co(2+) results in similar catalytic activity, substitution with Cd(2+) and Cu(2+) reduces catalytic activity and substitution with Hg(2+) and Ca(2+) inhibits the enzyme. Inhibited by L-norvaline. Its function is as follows. Catalyzes the hydrolysis of L-arginine into urea and L-ornithine, which is a precursor for polyamine biosynthesis. By depleting host L-arginine, a substrate for nitric oxide synthase (NOS), prevents the production of nitric oxide (NO) by host activated macrophages, and thus allows the parasite to evade host immune response. This chain is Arginase, found in Entamoeba histolytica (strain ATCC 30459 / HM-1:IMSS / ABRM).